Reading from the N-terminus, the 149-residue chain is D-aminoacyl-tRNA deacylase (149 aa).

Positions 137-138 match the Gly-cisPro motif, important for rejection of L-amino acids motif; that stretch reads GP.

This sequence belongs to the DTD family. As to quaternary structure, homodimer.

Its subcellular location is the cytoplasm. It catalyses the reaction glycyl-tRNA(Ala) + H2O = tRNA(Ala) + glycine + H(+). The catalysed reaction is a D-aminoacyl-tRNA + H2O = a tRNA + a D-alpha-amino acid + H(+). Functionally, an aminoacyl-tRNA editing enzyme that deacylates mischarged D-aminoacyl-tRNAs. Also deacylates mischarged glycyl-tRNA(Ala), protecting cells against glycine mischarging by AlaRS. Acts via tRNA-based rather than protein-based catalysis; rejects L-amino acids rather than detecting D-amino acids in the active site. By recycling D-aminoacyl-tRNA to D-amino acids and free tRNA molecules, this enzyme counteracts the toxicity associated with the formation of D-aminoacyl-tRNA entities in vivo and helps enforce protein L-homochirality. The polypeptide is D-aminoacyl-tRNA deacylase (Clostridioides difficile (strain 630) (Peptoclostridium difficile)).